The sequence spans 130 residues: Modulator protein MzrA (130 aa).

Residues 1-15 (MIAAFIKRHAPQRRL) lie on the Cytoplasmic side of the membrane. A helical transmembrane segment spans residues 16–36 (SLWLALPVVALLALVMMPALF). Over 37 to 130 (RHDSALQIRA…RISFKPQSIG (94 aa)) the chain is Periplasmic.

Belongs to the MzrA family. In terms of assembly, interacts with EnvZ.

The protein localises to the cell inner membrane. Modulates the activity of the EnvZ/OmpR two-component regulatory system, probably by directly modulating EnvZ enzymatic activity and increasing stability of phosphorylated OmpR. This is Modulator protein MzrA from Erwinia tasmaniensis (strain DSM 17950 / CFBP 7177 / CIP 109463 / NCPPB 4357 / Et1/99).